The following is a 68-amino-acid chain: Phycobilisome 7.8 kDa linker polypeptide, allophycocyanin-associated, core (68 aa).

The 56-residue stretch at Ser2–Ala57 folds into the CpcD-like domain.

Belongs to the phycobilisome linker protein family.

The protein localises to the cellular thylakoid membrane. Its function is as follows. Rod linker protein, associated with allophycocyanin. Linker polypeptides determine the state of aggregation and the location of the disk-shaped phycobiliprotein units within the phycobilisome and modulate their spectroscopic properties in order to mediate a directed and optimal energy transfer. The sequence is that of Phycobilisome 7.8 kDa linker polypeptide, allophycocyanin-associated, core (apcC) from Nostoc sp. (strain PCC 7120 / SAG 25.82 / UTEX 2576).